Reading from the N-terminus, the 31-residue chain is Cyclotide cter-E (31 aa).

A cross-link (cyclopeptide (Gly-Asp)) is located at residues 1 to 31; it reads GIPCAESCVWIPCTVTALLGCSCKDKVCYLD. Disulfide bonds link Cys-4–Cys-21, Cys-8–Cys-23, and Cys-13–Cys-28.

Contains 3 disulfide bonds. In terms of processing, this is a cyclic peptide.

Probably participates in a plant defense mechanism. The chain is Cyclotide cter-E from Clitoria ternatea (Butterfly pea).